We begin with the raw amino-acid sequence, 197 residues long: Holliday junction branch migration complex subunit RuvA (197 aa).

Residues 1-64 (MYEYIKGTYM…EDFIGLYGFG (64 aa)) form a domain I region. The domain II stretch occupies residues 65–143 (SKEELELFNK…VNLDEGIQTD (79 aa)). The interval 144–149 (SNDIKV) is flexible linker. Residues 149 to 197 (VSSKILEEAKEALMSLGYSEKECEKALKNVEEKESLEIIIKESLKFLMN) are domain III.

Belongs to the RuvA family. Homotetramer. Forms an RuvA(8)-RuvB(12)-Holliday junction (HJ) complex. HJ DNA is sandwiched between 2 RuvA tetramers; dsDNA enters through RuvA and exits via RuvB. An RuvB hexamer assembles on each DNA strand where it exits the tetramer. Each RuvB hexamer is contacted by two RuvA subunits (via domain III) on 2 adjacent RuvB subunits; this complex drives branch migration. In the full resolvosome a probable DNA-RuvA(4)-RuvB(12)-RuvC(2) complex forms which resolves the HJ.

Its subcellular location is the cytoplasm. Functionally, the RuvA-RuvB-RuvC complex processes Holliday junction (HJ) DNA during genetic recombination and DNA repair, while the RuvA-RuvB complex plays an important role in the rescue of blocked DNA replication forks via replication fork reversal (RFR). RuvA specifically binds to HJ cruciform DNA, conferring on it an open structure. The RuvB hexamer acts as an ATP-dependent pump, pulling dsDNA into and through the RuvAB complex. HJ branch migration allows RuvC to scan DNA until it finds its consensus sequence, where it cleaves and resolves the cruciform DNA. This Hathewaya histolytica (Clostridium histolyticum) protein is Holliday junction branch migration complex subunit RuvA.